We begin with the raw amino-acid sequence, 210 residues long: Large ribosomal subunit protein bL17 (210 aa).

The segment at 177 to 210 is disordered; the sequence is TRSAQRPAFEQDAPESDSAPEAEAKTEEETASAN.

Belongs to the bacterial ribosomal protein bL17 family. As to quaternary structure, part of the 50S ribosomal subunit. Contacts protein L32.

This is Large ribosomal subunit protein bL17 from Rhodopirellula baltica (strain DSM 10527 / NCIMB 13988 / SH1).